The chain runs to 218 residues: MMDRFQKQRLRMVDTQIRARGVLNPRILEAMSRIPRHLFVEEALADQAYNDNPLPIGDMQTISQPYIVALMTDALDLKGREKVLEIGTGSGYQTALLAELADQVFSIERIASLANNARRILDQLGYYNVAIRIGDGTYGWKEESPFDAILVTAGAPDIPMPLIEQLKIGGRLVLPVGGRHIQDLVKVTRLSEDINELKKENLGGCRFVDLIGEYGWSG.

Residue Ser-63 is part of the active site.

Belongs to the methyltransferase superfamily. L-isoaspartyl/D-aspartyl protein methyltransferase family.

Its subcellular location is the cytoplasm. It catalyses the reaction [protein]-L-isoaspartate + S-adenosyl-L-methionine = [protein]-L-isoaspartate alpha-methyl ester + S-adenosyl-L-homocysteine. In terms of biological role, catalyzes the methyl esterification of L-isoaspartyl residues in peptides and proteins that result from spontaneous decomposition of normal L-aspartyl and L-asparaginyl residues. It plays a role in the repair and/or degradation of damaged proteins. The sequence is that of Protein-L-isoaspartate O-methyltransferase from Syntrophus aciditrophicus (strain SB).